The following is a 412-amino-acid chain: Adenylosuccinate synthetase (412 aa).

Residues 12–18 and 40–42 contribute to the GTP site; these read GDEGKGK and GHE. Residue Asp-13 is the Proton acceptor of the active site. The Mg(2+) site is built by Asp-13 and Gly-40. IMP is bound by residues 13-16, 38-41, Arg-134, Asn-212, Thr-227, and Arg-291; these read DEGK and NAGH. His-41 (proton donor) is an active-site residue. 287 to 293 contributes to the substrate binding site; it reads TSTGRRR. Residues Arg-293, 318–320, and 400–402 contribute to the GTP site; these read KLD and GTG.

This sequence belongs to the adenylosuccinate synthetase family. In terms of assembly, homodimer. Mg(2+) is required as a cofactor.

It is found in the cytoplasm. The enzyme catalyses IMP + L-aspartate + GTP = N(6)-(1,2-dicarboxyethyl)-AMP + GDP + phosphate + 2 H(+). It functions in the pathway purine metabolism; AMP biosynthesis via de novo pathway; AMP from IMP: step 1/2. Functionally, plays an important role in the de novo pathway and in the salvage pathway of purine nucleotide biosynthesis. Catalyzes the first committed step in the biosynthesis of AMP from IMP. The polypeptide is Adenylosuccinate synthetase (Fusarium vanettenii (strain ATCC MYA-4622 / CBS 123669 / FGSC 9596 / NRRL 45880 / 77-13-4) (Fusarium solani subsp. pisi)).